A 1116-amino-acid chain; its full sequence is Error-prone DNA polymerase (1116 aa).

The protein belongs to the DNA polymerase type-C family. DnaE2 subfamily.

Its subcellular location is the cytoplasm. The enzyme catalyses DNA(n) + a 2'-deoxyribonucleoside 5'-triphosphate = DNA(n+1) + diphosphate. Its function is as follows. DNA polymerase involved in damage-induced mutagenesis and translesion synthesis (TLS). It is not the major replicative DNA polymerase. This is Error-prone DNA polymerase from Sinorhizobium medicae (strain WSM419) (Ensifer medicae).